A 511-amino-acid polypeptide reads, in one-letter code: Bifunctional purine biosynthesis protein PurH (511 aa).

Residues 1-147 (MIQIKRALIS…KNYKHTLVLT (147 aa)) enclose the MGS-like domain.

This sequence belongs to the PurH family.

The catalysed reaction is (6R)-10-formyltetrahydrofolate + 5-amino-1-(5-phospho-beta-D-ribosyl)imidazole-4-carboxamide = 5-formamido-1-(5-phospho-D-ribosyl)imidazole-4-carboxamide + (6S)-5,6,7,8-tetrahydrofolate. The enzyme catalyses IMP + H2O = 5-formamido-1-(5-phospho-D-ribosyl)imidazole-4-carboxamide. It functions in the pathway purine metabolism; IMP biosynthesis via de novo pathway; 5-formamido-1-(5-phospho-D-ribosyl)imidazole-4-carboxamide from 5-amino-1-(5-phospho-D-ribosyl)imidazole-4-carboxamide (10-formyl THF route): step 1/1. Its pathway is purine metabolism; IMP biosynthesis via de novo pathway; IMP from 5-formamido-1-(5-phospho-D-ribosyl)imidazole-4-carboxamide: step 1/1. This is Bifunctional purine biosynthesis protein PurH from Leptospira interrogans serogroup Icterohaemorrhagiae serovar Lai (strain 56601).